The chain runs to 59 residues: MEGMIRIKLYRSPICTPDKQKRVVKGLGLRKVNQIVERPDTPVFRGMVKKIPHLLMVVE.

The protein belongs to the universal ribosomal protein uL30 family. As to quaternary structure, part of the 50S ribosomal subunit.

This is Large ribosomal subunit protein uL30 from Solibacter usitatus (strain Ellin6076).